The chain runs to 202 residues: Holliday junction resolvase RecU (202 aa).

Positions 85, 87, 100, and 119 each coordinate Mg(2+).

Belongs to the RecU family. Mg(2+) serves as cofactor.

Its subcellular location is the cytoplasm. The catalysed reaction is Endonucleolytic cleavage at a junction such as a reciprocal single-stranded crossover between two homologous DNA duplexes (Holliday junction).. Endonuclease that resolves Holliday junction intermediates in genetic recombination. Cleaves mobile four-strand junctions by introducing symmetrical nicks in paired strands. Promotes annealing of linear ssDNA with homologous dsDNA. Required for DNA repair, homologous recombination and chromosome segregation. This Streptococcus uberis (strain ATCC BAA-854 / 0140J) protein is Holliday junction resolvase RecU.